Reading from the N-terminus, the 447-residue chain is SPARC-related modular calcium-binding protein 2 (447 aa).

An N-terminal signal peptide occupies residues 1 to 21 (MLPPQLCWLPLLAALLPPVPA). A Kazal-like domain is found at 34–86 (QDKDRDCSLDCPSSPQKPLCASDGRTFLSRCEFQRAKCKDPQLEIAHRGNCKD). Disulfide bonds link C40–C71, C44–C64, C53–C84, C90–C113, C124–C131, and C133–C153. Residues 87-153 (VSRCVAERKY…TAVAHKTPRC (67 aa)) form the Thyroglobulin type-1 1 domain. The interval 147-230 (AHKTPRCPGS…QSALEEAKQP (84 aa)) is disordered. The span at 161–172 (VPQREGAGKADD) shows a compositional bias: basic and acidic residues. N-linked (GlcNAc...) asparagine glycosylation occurs at N206. Residues 206-216 (NKTNKNSASSC) are compositionally biased toward polar residues. In terms of domain architecture, Thyroglobulin type-1 2 spans 213-281 (ASSCDQEHQS…TSTRYEQPKC (69 aa)). 3 cysteine pairs are disulfide-bonded: C216–C240, C251–C258, and C260–C281. The segment covering 217-230 (DQEHQSALEEAKQP) has biased composition (basic and acidic residues). EF-hand domains follow at residues 347 to 382 (LEER…LRKK) and 384 to 419 (KPKK…TREE). Ca(2+) is bound by residues D360, N362, S364, D366, E371, D397, N399, D401, S403, and E408. Residue N362 is glycosylated (N-linked (GlcNAc...) asparagine). Residues 416-447 (TREEGKANTRKRHTPRGNAESSSSNRQPRKQG) form a disordered region.

Binds various proteins from the extracellular matrix. In terms of processing, N-glycosylated. As to expression, strongly expressed in ovary, followed by heart, muscle, spleen, brain, thymus, lung, liver, kidney, spleen, testis, ovary and skeletal muscle.

The protein localises to the secreted. It localises to the extracellular space. The protein resides in the extracellular matrix. Its subcellular location is the basement membrane. Can stimulate endothelial cell proliferation, migration, as well as angiogenesis. Promotes matrix assembly and cell adhesiveness. The chain is SPARC-related modular calcium-binding protein 2 (Smoc2) from Mus musculus (Mouse).